The primary structure comprises 726 residues: Methionine--tRNA ligase (726 aa).

Positions 12–22 (PYVNNIPHLGN) match the 'HIGH' region motif. Positions 143, 146, 155, and 158 each coordinate Zn(2+). Positions 330–334 (KFSKS) match the 'KMSKS' region motif. Lysine 333 lines the ATP pocket. The tRNA-binding domain maps to 562 to 667 (FSEKVCLKVV…DNPIPGERII (106 aa)).

Belongs to the class-I aminoacyl-tRNA synthetase family. MetG type 1 subfamily. Homodimer. The cofactor is Zn(2+).

It is found in the cytoplasm. It carries out the reaction tRNA(Met) + L-methionine + ATP = L-methionyl-tRNA(Met) + AMP + diphosphate. Is required not only for elongation of protein synthesis but also for the initiation of all mRNA translation through initiator tRNA(fMet) aminoacylation. This is Methionine--tRNA ligase from Borrelia turicatae (strain 91E135).